A 134-amino-acid chain; its full sequence is Profilin-3 (134 aa).

Cys13 and Cys118 form a disulfide bridge. The Involved in PIP2 interaction motif lies at 84–100; it reads AVIRGKKGSGGITIKKT. Thr114 is modified (phosphothreonine).

Belongs to the profilin family. Occurs in many kinds of cells as a complex with monomeric actin in a 1:1 ratio. In terms of processing, phosphorylated by MAP kinases.

The protein localises to the cytoplasm. The protein resides in the cytoskeleton. Its function is as follows. Binds to actin and affects the structure of the cytoskeleton. At high concentrations, profilin prevents the polymerization of actin, whereas it enhances it at low concentrations. The chain is Profilin-3 from Olea europaea (Common olive).